Consider the following 303-residue polypeptide: Cysteine synthase B (303 aa).

Lys-41 carries the N6-(pyridoxal phosphate)lysine modification. Pyridoxal 5'-phosphate-binding positions include Asn-71, 174 to 178 (GTTGT), and Ser-255.

Belongs to the cysteine synthase/cystathionine beta-synthase family. The cofactor is pyridoxal 5'-phosphate.

It catalyses the reaction O-acetyl-L-serine + hydrogen sulfide = L-cysteine + acetate. The protein operates within amino-acid biosynthesis; L-cysteine biosynthesis; L-cysteine from L-serine: step 2/2. Functionally, two cysteine synthase enzymes are found. Both catalyze the same reaction. Cysteine synthase B can also use thiosulfate in place of sulfide to give cysteine thiosulfonate as a product. In Salmonella typhimurium (strain LT2 / SGSC1412 / ATCC 700720), this protein is Cysteine synthase B (cysM).